Reading from the N-terminus, the 127-residue chain is Small ribosomal subunit protein uS12 (127 aa).

Residue aspartate 89 is modified to 3-methylthioaspartic acid.

It belongs to the universal ribosomal protein uS12 family. As to quaternary structure, part of the 30S ribosomal subunit. Contacts proteins S8 and S17. May interact with IF1 in the 30S initiation complex.

Functionally, with S4 and S5 plays an important role in translational accuracy. In terms of biological role, interacts with and stabilizes bases of the 16S rRNA that are involved in tRNA selection in the A site and with the mRNA backbone. Located at the interface of the 30S and 50S subunits, it traverses the body of the 30S subunit contacting proteins on the other side and probably holding the rRNA structure together. The combined cluster of proteins S8, S12 and S17 appears to hold together the shoulder and platform of the 30S subunit. This is Small ribosomal subunit protein uS12 from Campylobacter lari (strain RM2100 / D67 / ATCC BAA-1060).